Reading from the N-terminus, the 208-residue chain is Small ribosomal subunit protein uS4 (208 aa).

An S4 RNA-binding domain is found at 98–161 (RRLDNVVYRL…RKIPVLAEAQ (64 aa)).

Belongs to the universal ribosomal protein uS4 family. As to quaternary structure, part of the 30S ribosomal subunit. Contacts protein S5. The interaction surface between S4 and S5 is involved in control of translational fidelity.

Functionally, one of the primary rRNA binding proteins, it binds directly to 16S rRNA where it nucleates assembly of the body of the 30S subunit. In terms of biological role, with S5 and S12 plays an important role in translational accuracy. The polypeptide is Small ribosomal subunit protein uS4 (Desulfovibrio desulfuricans (strain ATCC 27774 / DSM 6949 / MB)).